Reading from the N-terminus, the 330-residue chain is Fructose-1,6-bisphosphatase class 1 (330 aa).

Positions 84, 103, 105, and 106 each coordinate Mg(2+). Residues 106 to 109 (DGSS), asparagine 196, and lysine 262 each bind substrate. Glutamate 268 is a Mg(2+) binding site.

This sequence belongs to the FBPase class 1 family. As to quaternary structure, homotetramer. The cofactor is Mg(2+).

The protein resides in the cytoplasm. The catalysed reaction is beta-D-fructose 1,6-bisphosphate + H2O = beta-D-fructose 6-phosphate + phosphate. It participates in carbohydrate biosynthesis; gluconeogenesis. The sequence is that of Fructose-1,6-bisphosphatase class 1 from Shewanella frigidimarina (strain NCIMB 400).